A 313-amino-acid polypeptide reads, in one-letter code: Porphobilinogen deaminase (313 aa).

Cysteine 242 bears the S-(dipyrrolylmethanemethyl)cysteine mark.

The protein belongs to the HMBS family. In terms of assembly, monomer. Dipyrromethane serves as cofactor.

It catalyses the reaction 4 porphobilinogen + H2O = hydroxymethylbilane + 4 NH4(+). Its pathway is porphyrin-containing compound metabolism; protoporphyrin-IX biosynthesis; coproporphyrinogen-III from 5-aminolevulinate: step 2/4. Functionally, tetrapolymerization of the monopyrrole PBG into the hydroxymethylbilane pre-uroporphyrinogen in several discrete steps. This chain is Porphobilinogen deaminase, found in Proteus mirabilis (strain HI4320).